Consider the following 352-residue polypeptide: Putative pectinesterase 11 (352 aa).

A helical membrane pass occupies residues 13–35; it reads ANYHHIIIINIFILSSITSSSMA. N-linked (GlcNAc...) asparagine glycosylation occurs at Asn-76. The active-site Proton donor is the Asp-175. Asp-196 (nucleophile) is an active-site residue. A glycan (N-linked (GlcNAc...) asparagine) is linked at Asn-218. Residues Arg-252 and Trp-254 each coordinate substrate. The disordered stretch occupies residues 332–352; it reads LRPAPSHFKNAPKQTQNKEIN. A compositionally biased stretch (polar residues) spans 343 to 352; the sequence is PKQTQNKEIN.

It belongs to the pectinesterase family.

Its subcellular location is the membrane. The catalysed reaction is [(1-&gt;4)-alpha-D-galacturonosyl methyl ester](n) + n H2O = [(1-&gt;4)-alpha-D-galacturonosyl](n) + n methanol + n H(+). Its pathway is glycan metabolism; pectin degradation; 2-dehydro-3-deoxy-D-gluconate from pectin: step 1/5. In terms of biological role, acts in the modification of cell walls via demethylesterification of cell wall pectin. This chain is Putative pectinesterase 11 (PME11), found in Arabidopsis thaliana (Mouse-ear cress).